Consider the following 235-residue polypeptide: uncharacterized protein (235 aa).

The next 3 membrane-spanning stretches (helical) occupy residues 41–61 (IFWH…IYRL), 71–91 (LRTF…IEFP), and 129–149 (IGII…TPTI).

The protein resides in the membrane. This is an uncharacterized protein from Schizosaccharomyces pombe (strain 972 / ATCC 24843) (Fission yeast).